Here is a 260-residue protein sequence, read N- to C-terminus: MSNLINGKIPNQAIQTLKIVKDLFGSSIVGVYLFGSAVNGGLRINSDVDVLVVVNHSLPQLTRKKLTERLMTISGKIGNTDSVRPLEVTVINRSEVVPWQYPPKREFIYGEWLRGEFENGQIQEPSYDPDLAIVLAQARKNSISLFGPDSSSILVSVPLTDIRRAIKDSLPELIEGIKGDERNVILTLARMWQTVTTGEITSKDVAAEWAIPLLPKEHVTLLDIARKGYRGECDDKWEGLYSKVKALVKYMKNSIETSLN.

It carries out the reaction spectinomycin + ATP = 9-O-adenylylspectinomycin + diphosphate. Mediates bacterial resistance to the antibiotic spectinomycin but not streptomycin. This is Spectinomycin 9-adenylyltransferase (ant1) from Staphylococcus aureus (strain Mu50 / ATCC 700699).